Reading from the N-terminus, the 218-residue chain is Small ribosomal subunit protein uS3 (218 aa).

A KH type-2 domain is found at 38-106 (IRKYIESKLA…RVHINIVEIK (69 aa)).

It belongs to the universal ribosomal protein uS3 family. In terms of assembly, part of the 30S ribosomal subunit. Forms a tight complex with proteins S10 and S14.

Its function is as follows. Binds the lower part of the 30S subunit head. Binds mRNA in the 70S ribosome, positioning it for translation. This chain is Small ribosomal subunit protein uS3, found in Ligilactobacillus salivarius (strain UCC118) (Lactobacillus salivarius).